We begin with the raw amino-acid sequence, 467 residues long: Asparagine--tRNA ligase (467 aa).

This sequence belongs to the class-II aminoacyl-tRNA synthetase family. As to quaternary structure, homodimer.

Its subcellular location is the cytoplasm. The catalysed reaction is tRNA(Asn) + L-asparagine + ATP = L-asparaginyl-tRNA(Asn) + AMP + diphosphate + H(+). The sequence is that of Asparagine--tRNA ligase from Bacteroides fragilis (strain YCH46).